A 281-amino-acid polypeptide reads, in one-letter code: Beta-etherase (281 aa).

The GST N-terminal domain occupies Asp11 to Pro87. The segment at Gly244–Asp281 is disordered.

This sequence belongs to the GST superfamily.

Its subcellular location is the cell inner membrane. Functionally, able to degrade various dimeric lignin compounds. Catalyzes the unique and reductive cleavage of arylglycerol-beta-aryl ether. The chain is Beta-etherase (ligE) from Sphingobium sp. (strain NBRC 103272 / SYK-6).